The following is an 83-amino-acid chain: Cardiotoxin 7'' (83 aa).

The signal sequence occupies residues 1–21 (MKTLLLTLVVVTIVCLDLGYT). Cystine bridges form between C24-C43, C36-C61, C65-C76, and C77-C82.

It belongs to the three-finger toxin family. Short-chain subfamily. Orphan group XV sub-subfamily. As to expression, expressed by the venom gland.

Its subcellular location is the secreted. It is found in the target cell membrane. Its function is as follows. Has low cytotoxic activity. The polypeptide is Cardiotoxin 7'' (Naja atra (Chinese cobra)).